Consider the following 149-residue polypeptide: Nucleoside diphosphate kinase (149 aa).

Positions 9, 57, 85, 91, 102, and 112 each coordinate ATP. His-115 acts as the Pros-phosphohistidine intermediate in catalysis.

The protein belongs to the NDK family. In terms of assembly, homotetramer. Requires Mg(2+) as cofactor.

The protein resides in the cytoplasm. It carries out the reaction a 2'-deoxyribonucleoside 5'-diphosphate + ATP = a 2'-deoxyribonucleoside 5'-triphosphate + ADP. It catalyses the reaction a ribonucleoside 5'-diphosphate + ATP = a ribonucleoside 5'-triphosphate + ADP. Its function is as follows. Major role in the synthesis of nucleoside triphosphates other than ATP. The ATP gamma phosphate is transferred to the NDP beta phosphate via a ping-pong mechanism, using a phosphorylated active-site intermediate. The sequence is that of Nucleoside diphosphate kinase from Staphylococcus epidermidis (strain ATCC 35984 / DSM 28319 / BCRC 17069 / CCUG 31568 / BM 3577 / RP62A).